A 417-amino-acid polypeptide reads, in one-letter code: UPF0761 membrane protein Daci_4966 (417 aa).

6 helical membrane passes run 49–69 (VLALVPFFTVALALFTAFPIF), 106–126 (QLGMAGFSILVITAVALILTI), 146–166 (VLIYWAAITLGPLVLGLSLVL), 187–207 (FIFDSIEYLALAAGMAGLYHY), 235–255 (ALGLYLASVPTYSVIYGTFAT), and 256–276 (LPILLIWIYMAWIIVLLGAVV).

It belongs to the UPF0761 family.

The protein localises to the cell inner membrane. This Delftia acidovorans (strain DSM 14801 / SPH-1) protein is UPF0761 membrane protein Daci_4966.